The following is a 362-amino-acid chain: 3-dehydroquinate synthase (362 aa).

NAD(+) contacts are provided by residues 71-76 (DGEQYK), 105-109 (GVVGD), 129-130 (TT), Lys-142, Lys-151, and 169-172 (CLKT). Zn(2+) is bound by residues Glu-184, His-247, and His-264.

This sequence belongs to the sugar phosphate cyclases superfamily. Dehydroquinate synthase family. It depends on Co(2+) as a cofactor. The cofactor is Zn(2+). NAD(+) is required as a cofactor.

Its subcellular location is the cytoplasm. The catalysed reaction is 7-phospho-2-dehydro-3-deoxy-D-arabino-heptonate = 3-dehydroquinate + phosphate. Its pathway is metabolic intermediate biosynthesis; chorismate biosynthesis; chorismate from D-erythrose 4-phosphate and phosphoenolpyruvate: step 2/7. Its function is as follows. Catalyzes the conversion of 3-deoxy-D-arabino-heptulosonate 7-phosphate (DAHP) to dehydroquinate (DHQ). The polypeptide is 3-dehydroquinate synthase (Shigella boydii serotype 18 (strain CDC 3083-94 / BS512)).